A 206-amino-acid chain; its full sequence is Small ribosomal subunit protein uS4 (206 aa).

The segment at 23–47 (AKSPLNRREYGPGQHGQRRKGKLSD) is disordered. The 64-residue stretch at 94–157 (RRLDAVIYRA…RQLAIVLESV (64 aa)) folds into the S4 RNA-binding domain.

Belongs to the universal ribosomal protein uS4 family. As to quaternary structure, part of the 30S ribosomal subunit. Contacts protein S5. The interaction surface between S4 and S5 is involved in control of translational fidelity.

Its function is as follows. One of the primary rRNA binding proteins, it binds directly to 16S rRNA where it nucleates assembly of the body of the 30S subunit. With S5 and S12 plays an important role in translational accuracy. In Paracoccus denitrificans (strain Pd 1222), this protein is Small ribosomal subunit protein uS4.